An 81-amino-acid polypeptide reads, in one-letter code: Acyl carrier protein (81 aa).

Residues 3-78 enclose the Carrier domain; the sequence is QEIFEKVKSI…AAVDYIEKEQ (76 aa). Serine 38 is subject to O-(pantetheine 4'-phosphoryl)serine.

It belongs to the acyl carrier protein (ACP) family. 4'-phosphopantetheine is transferred from CoA to a specific serine of apo-ACP by AcpS. This modification is essential for activity because fatty acids are bound in thioester linkage to the sulfhydryl of the prosthetic group.

It localises to the cytoplasm. It participates in lipid metabolism; fatty acid biosynthesis. Its function is as follows. Carrier of the growing fatty acid chain in fatty acid biosynthesis. This is Acyl carrier protein from Crocosphaera subtropica (strain ATCC 51142 / BH68) (Cyanothece sp. (strain ATCC 51142)).